A 72-amino-acid polypeptide reads, in one-letter code: Large ribosomal subunit protein uL29 (72 aa).

This sequence belongs to the universal ribosomal protein uL29 family.

This Chlamydia trachomatis serovar L2 (strain ATCC VR-902B / DSM 19102 / 434/Bu) protein is Large ribosomal subunit protein uL29.